We begin with the raw amino-acid sequence, 420 residues long: Deoxyribodipyrimidine photo-lyase (420 aa).

Residues 2–124 (GPLLVWHRGD…PLHLLPAPHL (123 aa)) form the Photolyase/cryptochrome alpha/beta domain. Residues 152 to 175 (APEALPKGPEEGEIPREDPGLPLP) are disordered. The segment covering 159-170 (GPEEGEIPREDP) has biased composition (basic and acidic residues). Residue tyrosine 197 participates in FAD binding. Residue arginine 201 participates in DNA binding. 209–213 (GSRLS) serves as a coordination point for FAD. Interaction with DNA stretches follow at residues 244–251 (ELLWRDFS) and 310–311 (NR). Residue 341–343 (DGD) coordinates FAD. Glutamine 373 is a DNA binding site.

This sequence belongs to the DNA photolyase class-1 family. In terms of assembly, monomer. Requires FAD as cofactor.

The catalysed reaction is cyclobutadipyrimidine (in DNA) = 2 pyrimidine residues (in DNA).. Functionally, involved in repair of UV radiation-induced DNA damage. Catalyzes the light-dependent monomerization (300-600 nm) of cyclobutyl pyrimidine dimers (in cis-syn configuration), which are formed between adjacent bases on the same DNA strand upon exposure to ultraviolet radiation. The protein is Deoxyribodipyrimidine photo-lyase (phr) of Thermus thermophilus (strain ATCC BAA-163 / DSM 7039 / HB27).